Reading from the N-terminus, the 390-residue chain is Alkanesulfonate monooxygenase 1 (390 aa).

The tract at residues 364–390 is disordered; sequence TGSSVNTGPFGETIAGDHRPKSLASAS.

The protein belongs to the SsuD family.

It catalyses the reaction an alkanesulfonate + FMNH2 + O2 = an aldehyde + FMN + sulfite + H2O + 2 H(+). Functionally, catalyzes the desulfonation of aliphatic sulfonates. This chain is Alkanesulfonate monooxygenase 1 (ssuD1), found in Mesorhizobium japonicum (strain LMG 29417 / CECT 9101 / MAFF 303099) (Mesorhizobium loti (strain MAFF 303099)).